The following is a 334-amino-acid chain: Beta-hexosaminidase (334 aa).

Substrate-binding positions include D60, R68, R133, and 163 to 164; that span reads KH. The active-site Proton donor/acceptor is the H176. D247 acts as the Nucleophile in catalysis.

This sequence belongs to the glycosyl hydrolase 3 family. NagZ subfamily.

The protein resides in the cytoplasm. It carries out the reaction Hydrolysis of terminal non-reducing N-acetyl-D-hexosamine residues in N-acetyl-beta-D-hexosaminides.. The protein operates within cell wall biogenesis; peptidoglycan recycling. In terms of biological role, plays a role in peptidoglycan recycling by cleaving the terminal beta-1,4-linked N-acetylglucosamine (GlcNAc) from peptide-linked peptidoglycan fragments, giving rise to free GlcNAc, anhydro-N-acetylmuramic acid and anhydro-N-acetylmuramic acid-linked peptides. In Xanthomonas axonopodis pv. citri (strain 306), this protein is Beta-hexosaminidase.